Consider the following 825-residue polypeptide: Breast cancer anti-estrogen resistance protein 3 (825 aa).

An N-acetylalanine modification is found at A2. Residues S32, S78, and S83 each carry the phosphoserine modification. The segment at 40–106 is disordered; that stretch reads DAYQDVSIHG…DRHGETFTFR (67 aa). Positions 79 to 94 are enriched in polar residues; it reads PRQNSPVTQDGIQESP. Positions 95-106 are enriched in basic and acidic residues; the sequence is WQDRHGETFTFR. Residues 154 to 253 enclose the SH2 domain; the sequence is WYHGRIPRQV…QSGAIIFQPI (100 aa). A phosphoserine mark is found at S182 and S290. An N6-methyllysine modification is found at K334. S358, S363, and S375 each carry phosphoserine. R442 is modified (omega-N-methylarginine). The residue at position 471 (S471) is a Phosphoserine. The region spanning 548-818 is the Ras-GEF domain; sequence DPKVIAQHVL…TALSRKLEPP (271 aa). The interval 744-748 is mediates the interaction with BCAR1/p130CAS; the sequence is LATAR.

In terms of assembly, part of a complex comprised of PTPRA, BCAR1, BCAR3 (via SH2 domain) and SRC; the formation of the complex is dependent on integrin mediated-tyrosine phosphorylation of PTPRA. Within the complex, interacts (via SH2 domain) with PTPRA (when phosphorylated on 'Tyr-798'). Interacts (via Ras-GEF domain) with BCAR1. Interacts (via Ras-GEF domain) with NEDD9. Interacts with PTK2/FAK1. Interacts with PTPN1. Interacts (via SH2 domain) with EGFR (when tyrosine-phosphorylated). Post-translationally, phosphorylated on tyrosine residues. Ubiquitously expressed. Found in several cancer cell lines, but not in nonmalignant breast tissue.

The protein localises to the cytoplasm. It is found in the cell junction. The protein resides in the focal adhesion. Acts as an adapter protein downstream of several growth factor receptors to promote cell proliferation, migration, and redistribution of actin fibers. Specifically involved in INS/insulin signaling pathway by mediating MAPK1/ERK2-MAPK3/ERK1 activation and DNA synthesis. Promotes insulin-mediated membrane ruffling. In response to vasoconstrictor peptide EDN1, involved in the activation of RAP1 downstream of PTK2B via interaction with phosphorylated BCAR1. Inhibits cell migration and invasion via regulation of TGFB-mediated matrix digestion, actin filament rearrangement, and inhibition of invadopodia activity. May inhibit TGFB-SMAD signaling, via facilitating BCAR1 and SMAD2 and/or SMAD3 interaction. Regulates EGF-induced DNA synthesis. Required for the maintenance of ocular lens morphology and structural integrity, potentially via regulation of focal adhesion complex signaling. Acts upstream of PTPRA to regulate the localization of BCAR1 and PTPRA to focal adhesions, via regulation of SRC-mediated phosphorylation of PTPRA. Positively regulates integrin-induced tyrosine phosphorylation of BCAR1. Acts as a guanine nucleotide exchange factor (GEF) for small GTPases RALA, RAP1A and RRAS. However, in a contrasting study, lacks GEF activity towards RAP1. This is Breast cancer anti-estrogen resistance protein 3 (BCAR3) from Homo sapiens (Human).